Here is a 659-residue protein sequence, read N- to C-terminus: tRNA (guanine(26)-N(2))-dimethyltransferase (659 aa).

Residues 1–23 constitute a mitochondrion transit peptide; it reads MQGSSLWLSLTFRSARVLSRARF. The 445-residue stretch at 55–499 folds into the Trm1 methyltransferase domain; sequence TTVTEGAAKI…APASALWDIM (445 aa). Residue arginine 82 coordinates S-adenosyl-L-methionine. Serine 120 carries the post-translational modification Phosphoserine. Residues arginine 166 and aspartate 184 each coordinate S-adenosyl-L-methionine. Residues cysteine 348, cysteine 351, cysteine 384, and cysteine 387 each contribute to the Zn(2+) site. Serine 517 is subject to Phosphoserine. 2 disordered regions span residues 537 to 578 and 616 to 659; these read EDAN…AMEE and RGDQ…PGID. Residues 543-575 carry the Nuclear localization signal motif; it reads SRQRGLKRFQANPEANWGPRPRARPGGKAADEA. The C3H1-type zinc finger occupies 600–627; the sequence is RLKTFPCKRFKEGTCQRGDQCCYSHSPP. At serine 625 the chain carries Phosphoserine. Phosphothreonine occurs at positions 628 and 646.

The protein belongs to the class I-like SAM-binding methyltransferase superfamily. Trm1 family. Post-translationally, (Microbial infection) Cleaved between Gln-530 and Ala-531 by the 3C-like proteinase nsp5 from human coronavirus SARS-CoV-2, leading to its inactivation.

The protein resides in the mitochondrion. It localises to the nucleus. The protein localises to the cytoplasm. The enzyme catalyses guanosine(26) in tRNA + 2 S-adenosyl-L-methionine = N(2)-dimethylguanosine(26) in tRNA + 2 S-adenosyl-L-homocysteine + 2 H(+). Dimethylates a single guanine residue at position 26 of most nuclear- and mitochondrial-encoded tRNAs using S-adenosyl-L-methionine as donor of the methyl groups. tRNA guanine(26)-dimethylation is required for redox homeostasis and ensure proper cellular proliferation and oxidative stress survival. The polypeptide is tRNA (guanine(26)-N(2))-dimethyltransferase (Homo sapiens (Human)).